The chain runs to 383 residues: Arginine biosynthesis bifunctional protein ArgJ (383 aa).

Substrate is bound by residues T146, K168, T179, E259, N378, and S383. The Nucleophile role is filled by T179.

It belongs to the ArgJ family. In terms of assembly, heterotetramer of two alpha and two beta chains.

It is found in the cytoplasm. The catalysed reaction is N(2)-acetyl-L-ornithine + L-glutamate = N-acetyl-L-glutamate + L-ornithine. The enzyme catalyses L-glutamate + acetyl-CoA = N-acetyl-L-glutamate + CoA + H(+). It functions in the pathway amino-acid biosynthesis; L-arginine biosynthesis; L-ornithine and N-acetyl-L-glutamate from L-glutamate and N(2)-acetyl-L-ornithine (cyclic): step 1/1. It participates in amino-acid biosynthesis; L-arginine biosynthesis; N(2)-acetyl-L-ornithine from L-glutamate: step 1/4. Catalyzes two activities which are involved in the cyclic version of arginine biosynthesis: the synthesis of N-acetylglutamate from glutamate and acetyl-CoA as the acetyl donor, and of ornithine by transacetylation between N(2)-acetylornithine and glutamate. In Streptomyces avermitilis (strain ATCC 31267 / DSM 46492 / JCM 5070 / NBRC 14893 / NCIMB 12804 / NRRL 8165 / MA-4680), this protein is Arginine biosynthesis bifunctional protein ArgJ.